A 101-amino-acid chain; its full sequence is MMFEHVLFLSAYLFSIGIYGLITSRSMVRALMCLELILNSVNINLVTFSDLFDSRQLKGDIFSIFVIAIAAAEAAIGLAIVSSIYRNRKSIRINQSNLLNK.

Transmembrane regions (helical) follow at residues 2–22 (MFEH…YGLI), 32–52 (MCLE…SDLF), and 61–81 (IFSI…LAIV).

It belongs to the complex I subunit 4L family. In terms of assembly, NDH is composed of at least 16 different subunits, 5 of which are encoded in the nucleus.

It is found in the plastid. The protein resides in the chloroplast thylakoid membrane. It carries out the reaction a plastoquinone + NADH + (n+1) H(+)(in) = a plastoquinol + NAD(+) + n H(+)(out). The catalysed reaction is a plastoquinone + NADPH + (n+1) H(+)(in) = a plastoquinol + NADP(+) + n H(+)(out). NDH shuttles electrons from NAD(P)H:plastoquinone, via FMN and iron-sulfur (Fe-S) centers, to quinones in the photosynthetic chain and possibly in a chloroplast respiratory chain. The immediate electron acceptor for the enzyme in this species is believed to be plastoquinone. Couples the redox reaction to proton translocation, and thus conserves the redox energy in a proton gradient. The sequence is that of NAD(P)H-quinone oxidoreductase subunit 4L, chloroplastic from Lemna minor (Common duckweed).